The sequence spans 401 residues: MPKKTIANLSRADVEGKRVLVRVDFNVPLDDAGNITDDTRIRAALPTIQDLISKGAKVILCSHFGRPKGKVVESMRLTPTAKRLSELLGQDVVMCDDCVGASVTEAVNKLENGQVALLENLRFHAEEEGNDPEFSKQLAANADLYVNDAFGTAHRAHASTEGVTHYLSPSVAGYLIEKELNYLQSAIENPQRPLAAIIGGSKVSSKIGVIETLLEKCDKLLIGGGMIFTFYKARGLSVGKSLVEEDKLELAKSLEAKASEKGVQLLLPTDVVVADAFDANANDKTVKIEEIPDGWMGLDIGPDSVKLFQDALADCKSVIWNGPMGVFEFDKFAKGTEAIAYTLETLTGKGATTIIGGGDSVAAVEKVGVADKMSHISTGGGASLELLEGKVLPGIAALDEA.

Substrate contacts are provided by residues 24-26 (DFN), arginine 40, 63-66 (HFGR), arginine 122, and arginine 155. ATP is bound by residues lysine 206, glycine 297, glutamate 328, and 357 to 360 (GGDS).

This sequence belongs to the phosphoglycerate kinase family. In terms of assembly, monomer.

It is found in the cytoplasm. It catalyses the reaction (2R)-3-phosphoglycerate + ATP = (2R)-3-phospho-glyceroyl phosphate + ADP. Its pathway is carbohydrate degradation; glycolysis; pyruvate from D-glyceraldehyde 3-phosphate: step 2/5. This is Phosphoglycerate kinase from Gloeothece citriformis (strain PCC 7424) (Cyanothece sp. (strain PCC 7424)).